We begin with the raw amino-acid sequence, 235 residues long: Phosphoribosylaminoimidazole-succinocarboxamide synthase (235 aa).

Belongs to the SAICAR synthetase family.

The enzyme catalyses 5-amino-1-(5-phospho-D-ribosyl)imidazole-4-carboxylate + L-aspartate + ATP = (2S)-2-[5-amino-1-(5-phospho-beta-D-ribosyl)imidazole-4-carboxamido]succinate + ADP + phosphate + 2 H(+). It functions in the pathway purine metabolism; IMP biosynthesis via de novo pathway; 5-amino-1-(5-phospho-D-ribosyl)imidazole-4-carboxamide from 5-amino-1-(5-phospho-D-ribosyl)imidazole-4-carboxylate: step 1/2. The chain is Phosphoribosylaminoimidazole-succinocarboxamide synthase from Chlorobaculum tepidum (strain ATCC 49652 / DSM 12025 / NBRC 103806 / TLS) (Chlorobium tepidum).